The chain runs to 699 residues: Endogenous retrovirus group K member 19 Env polyprotein (699 aa).

The tract at residues 1–47 (MNPSEMQRKAPPRRRRHRNRAPLTHKMNKMVTSEEQMKLPSTKKAEP) is disordered. An N-terminal signal peptide occupies residues 1–89 (MNPSEMQRKA…ALMIVSMVVS (89 aa)). Residues 10 to 20 (APPRRRRHRNR) show a composition bias toward basic residues. The Extracellular portion of the chain corresponds to 90–632 (LPMPAGAAAA…NLNPVTWVKT (543 aa)). Residues Asn-100, Asn-128, Asn-153, Asn-274, Asn-355, Asn-372, and Asn-461 are each glycosylated (N-linked (GlcNAc...) asparagine). Positions 466 to 486 (FIFTLIAVIMGLIAVTATAAV) are fusion peptide. Asn-507, Asn-554, Asn-566, and Asn-585 each carry an N-linked (GlcNAc...) asparagine glycan. The helical transmembrane segment at 633 to 653 (IGSTTIINLILILVCLFCLLL) threads the bilayer. Residues 654-699 (VCRCTQQLRRDSDHRERAMMTMAVLSKRKGGNVGKSKRDQIVTVSV) are Cytoplasmic-facing.

This sequence belongs to the beta type-B retroviral envelope protein family. HERV class-II K(HML-2) env subfamily. As to quaternary structure, the surface (SU) and transmembrane (TM) proteins form a heterodimer. SU and TM are attached by noncovalent interactions or by a labile interchain disulfide bond. In terms of processing, specific enzymatic cleavages in vivo yield the mature SU and TM proteins.

It is found in the cell membrane. The protein localises to the virion. Functionally, retroviral envelope proteins mediate receptor recognition and membrane fusion during early infection. Endogenous envelope proteins may have kept, lost or modified their original function during evolution. This endogenous envelope protein has lost its original fusogenic properties. SU mediates receptor recognition. Its function is as follows. TM anchors the envelope heterodimer to the viral membrane through one transmembrane domain. The other hydrophobic domain, called fusion peptide, mediates fusion of the viral membrane with the target cell membrane. In Homo sapiens (Human), this protein is Endogenous retrovirus group K member 19 Env polyprotein (ERVK-19).